The following is a 412-amino-acid chain: COP9 signalosome complex subunit 4 (412 aa).

A PCI domain is found at 216-378 (EAAQRYYELS…GILHFEDSNP (163 aa)).

Belongs to the CSN4 family. Component of the CSN complex, probably composed of csn-1, csn-2, csn-3, csn-4, csn-5, csn-6 and csn-7. Within the complex it probably interacts directly with csn-2 and csn-4. In the complex, it probably interacts directly with csn-1, csn-2, csn-3 and csn-6. Interacts with itself.

The protein localises to the cytoplasm. It localises to the nucleus. Functionally, component of the COP9 signalosome complex (CSN), a complex involved in various cellular and developmental processes. The CSN complex is an essential regulator of the ubiquitin (Ubl) conjugation pathway by mediating the deneddylation of the cullin subunits of the SCF-type E3 ligase complexes, leading to decrease the Ubl ligase activity of SCF. The CSN complex plays an essential role in embryogenesis and oogenesis and is required to regulate microtubule stability in the early embryo. Mediates mei-3/katanin targeting for degradation at the meiosis to mitosis transition via deneddylation of cul-3. This chain is COP9 signalosome complex subunit 4 (csn-4), found in Caenorhabditis elegans.